The chain runs to 394 residues: Flavohemoprotein (394 aa).

In terms of domain architecture, Globin spans 1-136; the sequence is MLSENTINIV…LANVFIQREE (136 aa). His85 is a binding site for heme b. Residues Tyr95 and Glu135 each act as charge relay system in the active site. Residues 147–394 are reductase; the sequence is GGWRGLREFE…YECFGPHKVV (248 aa). The FAD-binding FR-type domain maps to 150 to 255; the sequence is RGLREFELVE…AAPAGDFFLD (106 aa). FAD is bound by residues Tyr188 and 204–207; that span reads RQYS. 268–273 provides a ligand contact to NADP(+); the sequence is GVGLTP. 387–390 lines the FAD pocket; sequence CFGP.

Belongs to the globin family. Two-domain flavohemoproteins subfamily. It in the C-terminal section; belongs to the flavoprotein pyridine nucleotide cytochrome reductase family. The cofactor is heme b. It depends on FAD as a cofactor.

The catalysed reaction is 2 nitric oxide + NADPH + 2 O2 = 2 nitrate + NADP(+) + H(+). It catalyses the reaction 2 nitric oxide + NADH + 2 O2 = 2 nitrate + NAD(+) + H(+). In terms of biological role, is involved in NO detoxification in an aerobic process, termed nitric oxide dioxygenase (NOD) reaction that utilizes O(2) and NAD(P)H to convert NO to nitrate, which protects the bacterium from various noxious nitrogen compounds. Therefore, plays a central role in the inducible response to nitrosative stress. This Vibrio vulnificus (strain CMCP6) protein is Flavohemoprotein.